The following is a 320-amino-acid chain: o-succinylbenzoate synthase (320 aa).

Lysine 133 acts as the Proton donor in catalysis. The Mg(2+) site is built by aspartate 161, glutamate 190, and aspartate 213. Residue lysine 235 is the Proton acceptor of the active site.

Belongs to the mandelate racemase/muconate lactonizing enzyme family. MenC type 1 subfamily. Requires a divalent metal cation as cofactor.

It catalyses the reaction (1R,6R)-6-hydroxy-2-succinyl-cyclohexa-2,4-diene-1-carboxylate = 2-succinylbenzoate + H2O. Its pathway is quinol/quinone metabolism; 1,4-dihydroxy-2-naphthoate biosynthesis; 1,4-dihydroxy-2-naphthoate from chorismate: step 4/7. The protein operates within quinol/quinone metabolism; menaquinone biosynthesis. Converts 2-succinyl-6-hydroxy-2,4-cyclohexadiene-1-carboxylate (SHCHC) to 2-succinylbenzoate (OSB). The protein is o-succinylbenzoate synthase of Shigella boydii serotype 4 (strain Sb227).